A 232-amino-acid chain; its full sequence is tRNA (guanine-N(7)-)-methyltransferase (232 aa).

Residues E63, E88, D115, and D137 each contribute to the S-adenosyl-L-methionine site. The active site involves D137. Substrate-binding positions include K141, D173, and 211-214; that span reads TRYE.

This sequence belongs to the class I-like SAM-binding methyltransferase superfamily. TrmB family.

The enzyme catalyses guanosine(46) in tRNA + S-adenosyl-L-methionine = N(7)-methylguanosine(46) in tRNA + S-adenosyl-L-homocysteine. It participates in tRNA modification; N(7)-methylguanine-tRNA biosynthesis. Functionally, catalyzes the formation of N(7)-methylguanine at position 46 (m7G46) in tRNA. This chain is tRNA (guanine-N(7)-)-methyltransferase, found in Rhizobium meliloti (strain 1021) (Ensifer meliloti).